The sequence spans 312 residues: Malate dehydrogenase (312 aa).

NAD(+) is bound by residues 7 to 12 and D32; that span reads GAGNVG. R82 and R88 together coordinate substrate. Residues N95 and 118-120 each bind NAD(+); that span reads VSN. Substrate is bound by residues N120 and R151. Catalysis depends on H175, which acts as the Proton acceptor.

The protein belongs to the LDH/MDH superfamily. MDH type 3 family.

The catalysed reaction is (S)-malate + NAD(+) = oxaloacetate + NADH + H(+). Catalyzes the reversible oxidation of malate to oxaloacetate. The protein is Malate dehydrogenase of Cytophaga hutchinsonii (strain ATCC 33406 / DSM 1761 / CIP 103989 / NBRC 15051 / NCIMB 9469 / D465).